The chain runs to 368 residues: 3-dehydroquinate synthase (368 aa).

NAD(+)-binding positions include Asp71 to Lys76, Gly105 to Asp109, Thr129 to Thr130, Lys142, Lys151, and Thr169 to Thr172. Zn(2+) is bound by residues Glu184, His247, and His264.

Belongs to the sugar phosphate cyclases superfamily. Dehydroquinate synthase family. It depends on Co(2+) as a cofactor. Zn(2+) serves as cofactor. Requires NAD(+) as cofactor.

The protein localises to the cytoplasm. The enzyme catalyses 7-phospho-2-dehydro-3-deoxy-D-arabino-heptonate = 3-dehydroquinate + phosphate. It functions in the pathway metabolic intermediate biosynthesis; chorismate biosynthesis; chorismate from D-erythrose 4-phosphate and phosphoenolpyruvate: step 2/7. In terms of biological role, catalyzes the conversion of 3-deoxy-D-arabino-heptulosonate 7-phosphate (DAHP) to dehydroquinate (DHQ). The chain is 3-dehydroquinate synthase from Ralstonia pickettii (strain 12J).